Reading from the N-terminus, the 2145-residue chain is Adenylate cyclase (2145 aa).

4 disordered regions span residues 1–115, 127–236, 266–307, and 329–547; these read MPRN…RMSD, DPAG…SGAR, GKEH…PVPK, and VRDI…GPTD. 3 stretches are compositionally biased toward low complexity: residues 7-23, 35-68, and 89-107; these read SSRF…SARS, PSAS…APSR, and SPTS…SSNS. Polar residues-rich tracts occupy residues 134 to 148 and 159 to 205; these read SRTQ…SLSQ and PASS…TESP. Low complexity predominate over residues 217–234; the sequence is SIASITTTASSQGSRASG. Over residues 269–281 the composition is skewed to basic residues; the sequence is HRSHSYSHARPHR. Polar residues predominate over residues 343-357; sequence NDSSQQNNPPKTSGS. Residues 377–403 show a composition bias toward basic and acidic residues; it reads KSNEDPRSLRPTVSREDSTISVPKDRN. Residues 404 to 441 show a composition bias toward polar residues; it reads GSSTMYGTRSRAQSPAPSTTGSYWGHKSGSTDGQTSPG. Basic and acidic residues-rich tracts occupy residues 454 to 466 and 495 to 511; these read RLKE…DLKK and ADGK…RPDL. The 91-residue stretch at 637–727 folds into the Ras-associating domain; it reads HNYCIRVFRA…IEDIGREDNS (91 aa). LRR repeat units follow at residues 779–800, 803–824, 826–847, 850–871, 873–894, 896–917, 919–941, 943–964, 965–986, 987–1006, 1007–1028, 1030–1051, 1053–1074, 1076–1097, and 1099–1120; these read EIIS…FISV, NLRD…FGYA, RLTM…ALHN, GLLK…FEAF, VLRT…LAKL, NLVD…VGQM, SLER…FKNL, SLRE…SQLP, KLEI…FERV, RSIK…APVP, TLKA…FHNM, NLER…IGNL, RLEY…IGCL, ELKR…LWWA, and KLDY…ASRA. The tract at residues 1114 to 1226 is disordered; it reads PKPASRAPHP…SSRKDSSHTQ (113 aa). Low complexity-rich tracts occupy residues 1160–1179 and 1201–1217; these read RPSQ…VPGG and SRST…PTAS. LRR repeat units follow at residues 1235 to 1255, 1259 to 1280, 1283 to 1304, 1307 to 1328, 1330 to 1352, and 1359 to 1380; these read SLRY…DQLC, NLRV…SIKS, QLVE…DLEE, MLQT…ISRA, KLTV…PYDW, and NLRY…SVPT. Residues 1432 to 1709 enclose the PPM-type phosphatase domain; it reads PYGMADTLGS…NKMTVQMLGV (278 aa). The tract at residues 1718-1760 is disordered; the sequence is RSRQHKGQSMPVYASLQDDGGSSTGMRRARKARDGPLDSTLGR. The region spanning 1773-1910 is the Guanylate cyclase domain; that stretch reads AIVFTDIKNS…PMVNKASRIS (138 aa). Residues aspartate 1778 and aspartate 1821 each coordinate Mg(2+).

Belongs to the adenylyl cyclase class-3 family. The cofactor is Mg(2+).

The enzyme catalyses ATP = 3',5'-cyclic AMP + diphosphate. Functionally, plays essential roles in regulation of cellular metabolism by catalyzing the synthesis of a second messenger, cAMP. This Podospora anserina (Pleurage anserina) protein is Adenylate cyclase.